The sequence spans 363 residues: Putative dipeptidase YkvY (363 aa).

Residues D222, D233, H297, E326, and E340 each coordinate Mn(2+).

The protein belongs to the peptidase M24B family. Requires Mn(2+) as cofactor.

The protein is Putative dipeptidase YkvY (ykvY) of Bacillus subtilis (strain 168).